The sequence spans 334 residues: Galactinol synthase 3 (334 aa).

The active site involves Lys-97. Mn(2+) contacts are provided by Asp-113, Asp-115, and His-251.

Belongs to the glycosyltransferase 8 family. Galactosyltransferase subfamily. A divalent metal cation is required as a cofactor.

The protein localises to the cytoplasm. It catalyses the reaction myo-inositol + UDP-alpha-D-galactose = alpha-D-galactosyl-(1-&gt;3)-1D-myo-inositol + UDP + H(+). Galactinol synthase involved in the biosynthesis of raffinose family oligosaccharides (RFOs) that function as osmoprotectants. May promote plant stress tolerance. The polypeptide is Galactinol synthase 3 (GOLS3) (Arabidopsis thaliana (Mouse-ear cress)).